Reading from the N-terminus, the 68-residue chain is MAVPKKRTSASKTRMRRSHHALAKVNVITDAKTGEYRLSHHVCMTHGTYNGKKVITDNVNTNDNNNNP.

The protein belongs to the bacterial ribosomal protein bL32 family.

The protein is Large ribosomal subunit protein bL32 of Orientia tsutsugamushi (strain Boryong) (Rickettsia tsutsugamushi).